The chain runs to 434 residues: Probable phosphoglucosamine mutase (434 aa).

The Phosphoserine intermediate role is filled by serine 91. Serine 91, aspartate 229, aspartate 231, and aspartate 233 together coordinate Mg(2+). Residue serine 91 is modified to Phosphoserine.

It belongs to the phosphohexose mutase family. The cofactor is Mg(2+). In terms of processing, activated by phosphorylation.

The enzyme catalyses alpha-D-glucosamine 1-phosphate = D-glucosamine 6-phosphate. Functionally, catalyzes the conversion of glucosamine-6-phosphate to glucosamine-1-phosphate. In Methanosarcina barkeri (strain Fusaro / DSM 804), this protein is Probable phosphoglucosamine mutase.